Reading from the N-terminus, the 361-residue chain is tRNA-specific 2-thiouridylase MnmA (361 aa).

Residues 9–16 (GMSGGVDS) and Met35 contribute to the ATP site. The segment at 95-97 (NPD) is interaction with target base in tRNA. Cys100 functions as the Nucleophile in the catalytic mechanism. Cysteines 100 and 196 form a disulfide. Gly124 provides a ligand contact to ATP. Residues 146-148 (KDQ) form an interaction with tRNA region. Catalysis depends on Cys196, which acts as the Cysteine persulfide intermediate. Positions 308–309 (RY) are interaction with tRNA.

It belongs to the MnmA/TRMU family.

The protein localises to the cytoplasm. The enzyme catalyses S-sulfanyl-L-cysteinyl-[protein] + uridine(34) in tRNA + AH2 + ATP = 2-thiouridine(34) in tRNA + L-cysteinyl-[protein] + A + AMP + diphosphate + H(+). In terms of biological role, catalyzes the 2-thiolation of uridine at the wobble position (U34) of tRNA, leading to the formation of s(2)U34. The polypeptide is tRNA-specific 2-thiouridylase MnmA (Nitrosomonas eutropha (strain DSM 101675 / C91 / Nm57)).